A 312-amino-acid polypeptide reads, in one-letter code: MEFTPISPPTRVAGGEEDSERGAAAWAVVEKEHMFEKVVTPSDVGKLNRLVIPKQHAERYFPLDAAAGAGGGGGGGGGGGGGKGLVLSFEDRTGKAWRFRYSYWNSSQSYVMTKGWSRFVKEKRLGAGDTVSFGRGLGDAARGRLFIDFRRRRQDAGSFMFPPTAAPPSHSHHHHQRHHPPLPSVPLCPWRDYTTAYGGGYGYGYGGGSTPASSRHVLFLRPQVPAAVVLKSVPVHVAATSAVQEAATTTRPKRVRLFGVNLDCPAAMDDDDDIAGAASRTAASSLLQLPSPSSSTSSSTAGKKMCSLDLGL.

The TF-B3 DNA-binding region spans 35 to 153; the sequence is FEKVVTPSDV…RLFIDFRRRR (119 aa). Disordered regions lie at residues 161 to 182 and 286 to 312; these read FPPT…HPPL and LLQL…DLGL. The segment covering 170 to 180 has biased composition (basic residues); sequence HSHHHHQRHHP. Residues 286–301 are compositionally biased toward low complexity; the sequence is LLQLPSPSSSTSSSTA.

The protein localises to the nucleus. This chain is Putative B3 domain-containing protein Os10g0537100, found in Oryza sativa subsp. japonica (Rice).